The sequence spans 133 residues: S-adenosylmethionine decarboxylase proenzyme (133 aa).

Catalysis depends on Ser64, which acts as the Schiff-base intermediate with substrate; via pyruvic acid. Ser64 is modified (pyruvic acid (Ser); by autocatalysis). Catalysis depends on His69, which acts as the Proton acceptor; for processing activity. Residue Cys84 is the Proton donor; for catalytic activity of the active site.

This sequence belongs to the prokaryotic AdoMetDC family. Type 1 subfamily. Heterotetramer of two alpha and two beta chains arranged as a dimer of alpha/beta heterodimers. It depends on pyruvate as a cofactor. Post-translationally, is synthesized initially as an inactive proenzyme. Formation of the active enzyme involves a self-maturation process in which the active site pyruvoyl group is generated from an internal serine residue via an autocatalytic post-translational modification. Two non-identical subunits are generated from the proenzyme in this reaction, and the pyruvate is formed at the N-terminus of the alpha chain, which is derived from the carboxyl end of the proenzyme. The post-translation cleavage follows an unusual pathway, termed non-hydrolytic serinolysis, in which the side chain hydroxyl group of the serine supplies its oxygen atom to form the C-terminus of the beta chain, while the remainder of the serine residue undergoes an oxidative deamination to produce ammonia and the pyruvoyl group blocking the N-terminus of the alpha chain.

The catalysed reaction is S-adenosyl-L-methionine + H(+) = S-adenosyl 3-(methylsulfanyl)propylamine + CO2. The protein operates within amine and polyamine biosynthesis; S-adenosylmethioninamine biosynthesis; S-adenosylmethioninamine from S-adenosyl-L-methionine: step 1/1. Catalyzes the decarboxylation of S-adenosylmethionine to S-adenosylmethioninamine (dcAdoMet), the propylamine donor required for the synthesis of the polyamines spermine and spermidine from the diamine putrescine. The protein is S-adenosylmethionine decarboxylase proenzyme of Persephonella marina (strain DSM 14350 / EX-H1).